Here is a 539-residue protein sequence, read N- to C-terminus: MAKTPAEKPATAAKKPAAPKAAAAPKAAAAKAPAAAKAPAAKKPAAPKAAAAPKAPAAGLEGATGRLVQIIGAVVDIEFDGALPAILNAVETVNTATGQRLVFEVAQHLGQSTVRAIAMDATEGLVRGQPVRDTGEPIRVPVGPGTLGRIMNVIGEPIDEQGPIRSDISRTIHRDAPSFAEQTNTAEVLVTGIKVIDLMCPYTKGGKIGLFGGAGVGKTVTMQELINNIAKAYGGYSVLAGVGERTREGNDLYHEMIESNVNVDPKANNGSTEGSRCALVYGQMNEPPGARARVALTGLSIAEYFRDEEGKDVLLFVDNIFRFTQAGAEVSALLGRIPSAVGYQPTLATEMGNLQERITSTNKGSITSVQAIYVPADDLTDPAPATSFAHLDATTVLSRDIAAQAIFPAVDPLDSTSRIMDPLVIGEEHYTVARRVQEVLQQYKALKDIIAILGMDELSEEDKLVVARARKIQRFLSQPFHVAEQFTNTPGAFVQLKDTIRSFKGIVDGEYDHLPEGAFYMVGPIEEAVAKAEKMAAEA.

A disordered region spans residues 1 to 44 (MAKTPAEKPATAAKKPAAPKAAAAPKAAAAKAPAAAKAPAAKKP). 212–219 (GGAGVGKT) is a binding site for ATP.

It belongs to the ATPase alpha/beta chains family. F-type ATPases have 2 components, CF(1) - the catalytic core - and CF(0) - the membrane proton channel. CF(1) has five subunits: alpha(3), beta(3), gamma(1), delta(1), epsilon(1). CF(0) has three main subunits: a(1), b(2) and c(9-12). The alpha and beta chains form an alternating ring which encloses part of the gamma chain. CF(1) is attached to CF(0) by a central stalk formed by the gamma and epsilon chains, while a peripheral stalk is formed by the delta and b chains.

Its subcellular location is the cell inner membrane. It catalyses the reaction ATP + H2O + 4 H(+)(in) = ADP + phosphate + 5 H(+)(out). Functionally, produces ATP from ADP in the presence of a proton gradient across the membrane. The catalytic sites are hosted primarily by the beta subunits. This Caulobacter vibrioides (strain ATCC 19089 / CIP 103742 / CB 15) (Caulobacter crescentus) protein is ATP synthase subunit beta.